A 645-amino-acid chain; its full sequence is COP9 signalosome complex subunit 10 (645 aa).

The segment covering methionine 1–aspartate 45 has biased composition (acidic residues). A disordered region spans residues methionine 1–glutamate 63. Over residues aspartate 46 to glutamate 63 the composition is skewed to basic and acidic residues. Positions aspartate 348–lysine 543 constitute a PCI domain.

In terms of assembly, component of a COP9 signalosome-like (CSN) complex, composed of at least RRI1/CSN5, CSN9, RRI2/CSN10, PCI8/CSN11, CSN12 and CSI1. In the complex, it probably interacts directly with CSN12.

Its subcellular location is the cytoplasm. It localises to the nucleus. Its function is as follows. Component of the COP9 signalosome (CSN) complex that acts as an regulator of the ubiquitin (Ubl) conjugation pathway by mediating the deneddylation of the cullin subunit of SCF-type E3 ubiquitin-protein ligase complexes. The CSN complex is involved in the regulation of the mating pheromone response. The chain is COP9 signalosome complex subunit 10 (RRI2) from Saccharomyces cerevisiae (strain ATCC 204508 / S288c) (Baker's yeast).